Consider the following 60-residue polypeptide: Metallothionein (60 aa).

Positions 1-28 (MDPCECSKTGKCSCGGSCTCTNCSCTSC) are beta. 20 residues coordinate a divalent metal cation: Cys4, Cys6, Cys12, Cys14, Cys18, Cys20, Cys23, Cys25, Cys28, Cys32, Cys33, Cys35, Cys36, Cys40, Cys43, Cys47, Cys49, Cys54, Cys58, and Cys59. Residues 29-60 (KKSCCPCCPSGCSKCASGCVCKGKTCDTSCCQ) form an alpha region.

The protein belongs to the metallothionein superfamily. Type 1 family.

In terms of biological role, metallothioneins have a high content of cysteine residues that bind various heavy metals. This is Metallothionein (mt) from Chelon auratus (Golden grey mullet).